We begin with the raw amino-acid sequence, 188 residues long: Protein SSX3 (188 aa).

The region spanning 20–83 is the KRAB-related domain; that stretch reads KIQKAFDDIA…KRVTDFQGND (64 aa). The tract at residues 113–162 is disordered; that stretch reads PKKPAEEGNVSKEVPEASGPQNDGKQLCPPGKPTTSEKINMISGPKRGEH. The segment covering 115 to 127 has biased composition (basic and acidic residues); it reads KPAEEGNVSKEVP. Phosphoserine is present on serine 123.

Belongs to the SSX family. As to quaternary structure, interacts with SSX2IP.

Functionally, could act as a modulator of transcription. The polypeptide is Protein SSX3 (SSX3) (Homo sapiens (Human)).